The following is a 356-amino-acid chain: Dihydroorotate dehydrogenase (quinone) (356 aa).

Residues A67–K71 and T91 contribute to the FMN site. K71 contacts substrate. N116–F120 lines the substrate pocket. 2 residues coordinate FMN: N153 and N186. N186 contacts substrate. S189 acts as the Nucleophile in catalysis. N191 provides a ligand contact to substrate. FMN-binding residues include K228 and T256. N257–T258 is a substrate binding site. Residues G282, G311, and Y332 to T333 each bind FMN.

The protein belongs to the dihydroorotate dehydrogenase family. Type 2 subfamily. As to quaternary structure, monomer. The cofactor is FMN.

The protein localises to the cell membrane. It catalyses the reaction (S)-dihydroorotate + a quinone = orotate + a quinol. The protein operates within pyrimidine metabolism; UMP biosynthesis via de novo pathway; orotate from (S)-dihydroorotate (quinone route): step 1/1. In terms of biological role, catalyzes the conversion of dihydroorotate to orotate with quinone as electron acceptor. This is Dihydroorotate dehydrogenase (quinone) from Pseudarthrobacter chlorophenolicus (strain ATCC 700700 / DSM 12829 / CIP 107037 / JCM 12360 / KCTC 9906 / NCIMB 13794 / A6) (Arthrobacter chlorophenolicus).